The primary structure comprises 103 residues: Large ribosomal subunit protein bL21 (103 aa).

The protein belongs to the bacterial ribosomal protein bL21 family. In terms of assembly, part of the 50S ribosomal subunit. Contacts protein L20.

Its function is as follows. This protein binds to 23S rRNA in the presence of protein L20. The protein is Large ribosomal subunit protein bL21 of Shewanella sp. (strain MR-7).